A 125-amino-acid polypeptide reads, in one-letter code: UPF0325 protein Ping_0715 (125 aa).

The protein belongs to the UPF0325 family.

The sequence is that of UPF0325 protein Ping_0715 from Psychromonas ingrahamii (strain DSM 17664 / CCUG 51855 / 37).